The chain runs to 1033 residues: SIT4-associating protein SAP190 (1033 aa).

Disordered stretches follow at residues 32 to 82 (DQDD…TTES), 147 to 213 (PEII…QVET), and 768 to 1033 (FGND…KEAF). Basic and acidic residues predominate over residues 158–170 (ILIERDRKDKKED). Residues 171–182 (AEEGGDSEETTN) show a composition bias toward acidic residues. Residues 183-195 (DSDHDSGDERSVD) show a composition bias toward basic and acidic residues. Ser-774 carries the post-translational modification Phosphoserine. 2 stretches are compositionally biased toward acidic residues: residues 784–793 (SEDIIGDTEG) and 825–838 (ENEE…EYSD). Phosphoserine is present on residues Ser-857, Ser-862, and Ser-892. A compositionally biased stretch (basic and acidic residues) spans 858–879 (DDGKSKSAESEFTDKISEHRDG). The segment covering 909-924 (SRSQPSDPKLQDQNIF) has biased composition (polar residues). Acidic residues predominate over residues 932 to 944 (GVGDDDDYMDPND). Thr-990 carries the phosphothreonine modification. At Ser-991 the chain carries Phosphoserine. Residues 1000–1018 (ISSDEEDSEDEDEENDMGN) are compositionally biased toward acidic residues.

This sequence belongs to the SAPS family. Associates with the SIT4 protein phosphatase catalytic subunit in a cell-cycle-dependent manner. In terms of processing, hyperphosphorylated in the absence of SIT4.

It is found in the cytoplasm. Functionally, positive regulator of protein phosphatase SIT4. Involved in the general amino acid control (GAAC) response regulated by TOR. Involved in the dephosphorylation of the elongator complex subunit IKI3. The chain is SIT4-associating protein SAP190 (SAP190) from Saccharomyces cerevisiae (strain ATCC 204508 / S288c) (Baker's yeast).